The chain runs to 390 residues: Mevalonate kinase (390 aa).

ATP is bound by residues lysine 16, serine 130, and 135 to 141; that span reads GAGLGSS. The Mg(2+) site is built by serine 141 and glutamate 193. Catalysis depends on aspartate 204, which acts as the Proton acceptor.

The protein belongs to the GHMP kinase family. Mevalonate kinase subfamily. The cofactor is Mg(2+).

The protein localises to the cytoplasm. The catalysed reaction is (R)-mevalonate + ATP = (R)-5-phosphomevalonate + ADP + H(+). Its pathway is isoprenoid biosynthesis; isopentenyl diphosphate biosynthesis via mevalonate pathway; isopentenyl diphosphate from (R)-mevalonate: step 1/3. Its function is as follows. Catalyzes the phosphorylation of mevalonate to mevalonate 5-phosphate, a key step in isoprenoid biosynthesis. This is Mevalonate kinase from Dictyostelium discoideum (Social amoeba).